Here is a 168-residue protein sequence, read N- to C-terminus: Gamma-glutamylaminecyclotransferase (168 aa).

Positions 1–20 (MPGPECKWSTTETGAPCGTD) are disordered. 32-35 (YGTL) provides a ligand contact to substrate. Catalysis depends on Glu107, which acts as the Proton acceptor.

It belongs to the gamma-glutamylcyclotransferase family. As to quaternary structure, monomer.

The catalysed reaction is epsilon-(gamma-L-glutamyl)-L-lysine = 5-oxo-L-proline + L-lysine. Functionally, contributes to degradation of proteins cross-linked by transglutaminases by degrading the cross-link between a lysine and a glutamic acid residue. Catalyzes the formation of 5-oxo-L-proline from L-gamma-glutamyl-L-epsilon-lysine. Inactive with L-gamma-glutamyl-alpha-amino acid substrates such as L-gamma-glutamyl-L-alpha-cysteine and L-gamma-glutamyl-L-alpha-alanine. The polypeptide is Gamma-glutamylaminecyclotransferase (GGACT) (Bos taurus (Bovine)).